A 36-amino-acid chain; its full sequence is Endoglucanase Cel12A (36 aa).

It belongs to the glycosyl hydrolase 12 (cellulase H) family.

It localises to the secreted. The protein resides in the extracellular space. The enzyme catalyses Endohydrolysis of (1-&gt;4)-beta-D-glucosidic linkages in cellulose, lichenin and cereal beta-D-glucans.. Has carboxymethylcellulase activity. This Gloeophyllum trabeum (Brown rot fungus) protein is Endoglucanase Cel12A.